A 98-amino-acid chain; its full sequence is Defensin-like protein 219 (98 aa).

The N-terminal stretch at 1–16 is a signal peptide; it reads MKTIFVFLTLAVLVSS. 3 cysteine pairs are disulfide-bonded: Cys-68–Cys-85, Cys-71–Cys-90, and Cys-75–Cys-92.

The protein belongs to the DEFL family.

It localises to the secreted. In Arabidopsis thaliana (Mouse-ear cress), this protein is Defensin-like protein 219.